The primary structure comprises 310 residues: Carbamate kinase 1 (310 aa).

Belongs to the carbamate kinase family.

It is found in the cytoplasm. It carries out the reaction hydrogencarbonate + NH4(+) + ATP = carbamoyl phosphate + ADP + H2O + H(+). It participates in metabolic intermediate metabolism; carbamoyl phosphate degradation; CO(2) and NH(3) from carbamoyl phosphate: step 1/1. The sequence is that of Carbamate kinase 1 (arcC1) from Staphylococcus aureus (strain COL).